The following is a 98-amino-acid chain: Large ribosomal subunit protein bL28 (98 aa).

This sequence belongs to the bacterial ribosomal protein bL28 family.

This Bartonella bacilliformis (strain ATCC 35685 / KC583 / Herrer 020/F12,63) protein is Large ribosomal subunit protein bL28.